A 435-amino-acid chain; its full sequence is Glutamyl-tRNA reductase (435 aa).

Substrate contacts are provided by residues Thr49 to Arg52, Ser109, Glu114 to Gln116, and Gln120. Cys50 functions as the Nucleophile in the catalytic mechanism. Gly189 to Ser194 serves as a coordination point for NADP(+).

It belongs to the glutamyl-tRNA reductase family. Homodimer.

It carries out the reaction (S)-4-amino-5-oxopentanoate + tRNA(Glu) + NADP(+) = L-glutamyl-tRNA(Glu) + NADPH + H(+). The protein operates within porphyrin-containing compound metabolism; protoporphyrin-IX biosynthesis; 5-aminolevulinate from L-glutamyl-tRNA(Glu): step 1/2. Catalyzes the NADPH-dependent reduction of glutamyl-tRNA(Glu) to glutamate 1-semialdehyde (GSA). The chain is Glutamyl-tRNA reductase from Listeria monocytogenes serotype 4b (strain F2365).